The sequence spans 368 residues: MEKSSNTTGSGGPKSDSQLPEKLRRTFSARAAKIKARKANRETSAAKIQRAWYIYVDKSLFKLLKHTVCAAEYCVAHELLKKVSPTEAALLKDPSMKCKVRFRFSGETFPPCIVFKIFLKSDSRGFTYFSGKNLLKPSSKAVADAYKIMGERKFYQQIMQDEYIFQKFKIADHMDVVTVQDYMQFCSLTDETPASSGGKNNYWRRLNLSNIPRTMMMYDIVDYAESGVISDRLQKEKKYLLQKPRTEEMRLHQLDIVSKVRYPTITTIRPFYQPWEQKREMKHLGRRSKKAQKRVEKMKKAYKESKEEKASSQEPPASRTQIKKKVIFYTPSFEILKVEELIDTDLESEERELFAWYQDLYVKHSSLF.

Disordered regions lie at residues 1-22 (MEKSSNTTGSGGPKSDSQLPEK) and 282-317 (KHLGRRSKKAQKRVEKMKKAYKESKEEKASSQEPPA). Over residues 293–311 (KRVEKMKKAYKESKEEKAS) the composition is skewed to basic and acidic residues.

This is an uncharacterized protein from Mus musculus (Mouse).